Consider the following 113-residue polypeptide: Translation initiation factor IF-1, chloroplastic (113 aa).

Positions 8–83 constitute an S1-like domain; the sequence is REKKNPREAK…SKGRIIYRLP (76 aa). Residues 86-113 form a disordered region; that stretch reads DSKRIEDSKDSEDLKDSEDLKDTKDSKD.

It belongs to the IF-1 family. In terms of assembly, component of the 30S ribosomal translation pre-initiation complex which assembles on the 30S ribosome in the order IF-2 and IF-3, IF-1 and N-formylmethionyl-tRNA(fMet); mRNA recruitment can occur at any time during PIC assembly.

The protein localises to the plastid. The protein resides in the chloroplast. Functionally, one of the essential components for the initiation of protein synthesis. Stabilizes the binding of IF-2 and IF-3 on the 30S subunit to which N-formylmethionyl-tRNA(fMet) subsequently binds. Helps modulate mRNA selection, yielding the 30S pre-initiation complex (PIC). Upon addition of the 50S ribosomal subunit IF-1, IF-2 and IF-3 are released leaving the mature 70S translation initiation complex. The chain is Translation initiation factor IF-1, chloroplastic from Hordeum vulgare (Barley).